The sequence spans 199 residues: 7-methyl-GTP pyrophosphatase (199 aa).

Catalysis depends on Asp-76, which acts as the Proton acceptor.

Belongs to the Maf family. YceF subfamily. A divalent metal cation is required as a cofactor.

The protein localises to the cytoplasm. The enzyme catalyses N(7)-methyl-GTP + H2O = N(7)-methyl-GMP + diphosphate + H(+). Its function is as follows. Nucleoside triphosphate pyrophosphatase that hydrolyzes 7-methyl-GTP (m(7)GTP). May have a dual role in cell division arrest and in preventing the incorporation of modified nucleotides into cellular nucleic acids. This is 7-methyl-GTP pyrophosphatase from Rhizobium etli (strain ATCC 51251 / DSM 11541 / JCM 21823 / NBRC 15573 / CFN 42).